We begin with the raw amino-acid sequence, 154 residues long: Myoglobin (154 aa).

In terms of domain architecture, Globin spans 2–148; that stretch reads GLSDDEWNHV…FRNDMASKYK (147 aa). His65 contributes to the nitrite binding site. His65 is an O2 binding site. His94 contributes to the heme b binding site.

It belongs to the globin family. In terms of assembly, monomeric.

The protein localises to the cytoplasm. It is found in the sarcoplasm. It catalyses the reaction Fe(III)-heme b-[protein] + nitric oxide + H2O = Fe(II)-heme b-[protein] + nitrite + 2 H(+). The catalysed reaction is H2O2 + AH2 = A + 2 H2O. Monomeric heme protein which primary function is to store oxygen and facilitate its diffusion within muscle tissues. Reversibly binds oxygen through a pentacoordinated heme iron and enables its timely and efficient release as needed during periods of heightened demand. Depending on the oxidative conditions of tissues and cells, and in addition to its ability to bind oxygen, it also has a nitrite reductase activity whereby it regulates the production of bioactive nitric oxide. Under stress conditions, like hypoxia and anoxia, it also protects cells against reactive oxygen species thanks to its pseudoperoxidase activity. This Chelonia mydas (Green sea-turtle) protein is Myoglobin (MB).